We begin with the raw amino-acid sequence, 127 residues long: Cystatin cpi-1 (127 aa).

Residues 1-19 (MFFPIVWLSVLLIISKSFA) form the signal peptide. Positions 68–72 (QVVAG) match the Secondary area of contact motif. A disulfide bond links Cys-86 and Cys-98.

This sequence belongs to the cystatin family.

In terms of biological role, cysteine protease inhibitor which inhibits members of the peptidase C1 family. Does not inhibit asparaginyl endopeptidase. This is Cystatin cpi-1 from Brugia malayi (Filarial nematode worm).